A 151-amino-acid polypeptide reads, in one-letter code: Protein Turandot Z (151 aa).

The first 23 residues, 1-23 (MSRLIHLSFVLALLACLTGTISA), serve as a signal peptide directing secretion.

This sequence belongs to the Turandot family.

Its subcellular location is the secreted. A humoral factor that may play a role in stress tolerance. The chain is Protein Turandot Z from Drosophila persimilis (Fruit fly).